Consider the following 562-residue polypeptide: NAD-dependent malic enzyme (562 aa).

Residue Tyr-101 is the Proton donor of the active site. NAD(+) is bound at residue Arg-154. Lys-172 functions as the Proton acceptor in the catalytic mechanism. Positions 243, 244, and 267 each coordinate a divalent metal cation. The NAD(+) site is built by Asp-267 and Asn-415.

This sequence belongs to the malic enzymes family. As to quaternary structure, homotetramer. Mg(2+) serves as cofactor. The cofactor is Mn(2+).

It carries out the reaction (S)-malate + NAD(+) = pyruvate + CO2 + NADH. The enzyme catalyses oxaloacetate + H(+) = pyruvate + CO2. The chain is NAD-dependent malic enzyme from Shewanella piezotolerans (strain WP3 / JCM 13877).